We begin with the raw amino-acid sequence, 591 residues long: Potassium-transporting ATPase potassium-binding subunit (591 aa).

10 consecutive transmembrane segments (helical) span residues 6 to 26 (WFQILLFLGLILAVTKPLGVF), 63 to 83 (WTEYAIAMLLFSAVSMLMLYI), 137 to 157 (GLAYHNFMSAAVGIAIAIAFI), 179 to 199 (VLWVLLPFCIMGALALVSQGV), 272 to 292 (LSNLIEMFSIFAISAGLTYTL), 303 to 323 (WAVWGAMAALFLVGVSVVYWA), 405 to 425 (AGMYGMLIYIVLAVFIAGLMV), 444 to 464 (AMLVALIFPLIILVFSAISSV), 510 to 530 (VAIGIAMLGGRFLMIIPMLAI), and 553 to 573 (LFSVLLIGTIIIIGALTFFPA).

This sequence belongs to the KdpA family. In terms of assembly, the system is composed of three essential subunits: KdpA, KdpB and KdpC.

The protein resides in the cell inner membrane. Part of the high-affinity ATP-driven potassium transport (or Kdp) system, which catalyzes the hydrolysis of ATP coupled with the electrogenic transport of potassium into the cytoplasm. This subunit binds the periplasmic potassium ions and delivers the ions to the membrane domain of KdpB through an intramembrane tunnel. The chain is Potassium-transporting ATPase potassium-binding subunit from Koribacter versatilis (strain Ellin345).